Consider the following 59-residue polypeptide: UPF0181 protein CKO_01169 (59 aa).

This sequence belongs to the UPF0181 family.

The sequence is that of UPF0181 protein CKO_01169 from Citrobacter koseri (strain ATCC BAA-895 / CDC 4225-83 / SGSC4696).